A 181-amino-acid polypeptide reads, in one-letter code: Cyclic AMP-dependent transcription factor ATF-3 (181 aa).

The interval 76-96 (VTKSEVAPEEDERKRRRRERN) is disordered. A Glycyl lysine isopeptide (Lys-Gly) (interchain with G-Cter in SUMO2) cross-link involves residue Lys78. The 64-residue stretch at 86-149 (DERKRRRRER…QHLIYMLNLH (64 aa)) folds into the bZIP domain. A basic motif region spans residues 88–110 (RKRRRRERNKIAAAKCRNKKKEK). A leucine-zipper region spans residues 114–142 (LQKESEKLESVNAELKAQIEELKNEKQHL). Phosphothreonine is present on Thr162. Lys175 participates in a covalent cross-link: Glycyl lysine isopeptide (Lys-Gly) (interchain with G-Cter in SUMO2).

It belongs to the bZIP family. ATF subfamily. As to quaternary structure, ATF3 alone can bind DNA, but it preferentially forms heteromeric complexes with JUN and JUNB and does not interact with FOS. As to expression, expressed in tissues containing skeletal muscle or smooth muscle. Expressed in cutaneous and muscular sensory neurons.

The protein localises to the nucleus. This protein binds the cAMP response element (CRE) (consensus: 5'-GTGACGT[AC][AG]-3'), a sequence present in many viral and cellular promoters. Represses transcription from promoters with ATF sites. It may repress transcription by stabilizing the binding of inhibitory cofactors at the promoter. The protein is Cyclic AMP-dependent transcription factor ATF-3 (Atf3) of Rattus norvegicus (Rat).